A 285-amino-acid polypeptide reads, in one-letter code: (3S)-malyl-CoA thioesterase (285 aa).

Positions 70 and 122 each coordinate substrate. The Mg(2+) site is built by glutamate 122 and aspartate 148.

This sequence belongs to the HpcH/HpaI aldolase family. Homodimer or homotrimer. The cofactor is Mg(2+).

It carries out the reaction (S)-malyl-CoA + H2O = (S)-malate + CoA + H(+). Functionally, catalyzes the hydrolysis of (3S)-malyl-CoA to (3S)-malate and free CoA. Inactive towards beta-methylmalyl-CoA and other CoA esters. The chain is (3S)-malyl-CoA thioesterase from Cereibacter sphaeroides (strain ATCC 17029 / ATH 2.4.9) (Rhodobacter sphaeroides).